The chain runs to 405 residues: Insertion element IS110 uncharacterized 43.6 kDa protein (405 aa).

The sequence is that of Insertion element IS110 uncharacterized 43.6 kDa protein from Streptomyces coelicolor (strain ATCC BAA-471 / A3(2) / M145).